Reading from the N-terminus, the 481-residue chain is Pyruvate kinase (481 aa).

Arg-36 lines the substrate pocket. K(+)-binding residues include Asn-38, Ser-40, and Asp-70. 38–41 (NFSH) serves as a coordination point for ATP. Residues Arg-77 and Lys-160 each contribute to the ATP site. Mg(2+) is bound at residue Glu-225. Residues Gly-251, Asp-252, and Thr-284 each contribute to the substrate site. Position 252 (Asp-252) interacts with Mg(2+).

It belongs to the pyruvate kinase family. In terms of assembly, homotetramer. The cofactor is Mg(2+). It depends on K(+) as a cofactor.

It catalyses the reaction pyruvate + ATP = phosphoenolpyruvate + ADP + H(+). The protein operates within carbohydrate degradation; glycolysis; pyruvate from D-glyceraldehyde 3-phosphate: step 5/5. Allosterically activated by AMP and by several sugar phosphates. Belongs to type II PK. This chain is Pyruvate kinase (pykA), found in Buchnera aphidicola subsp. Schizaphis graminum (strain Sg).